The sequence spans 114 residues: Putative toxin HigB3 (114 aa).

Belongs to the mycobacterial HigB family.

Putative toxic component of a type II toxin-antitoxin (TA) system. Its cognate antitoxin would be HigA3. Not toxic upon expression in M.smegmatis. The polypeptide is Putative toxin HigB3 (Mycobacterium tuberculosis (strain ATCC 25618 / H37Rv)).